A 165-amino-acid chain; its full sequence is SsrA-binding protein (165 aa).

A disordered region spans residues 141–165 (KLHDKRQDEKRKQADREVKSALARY). Residues 145–159 (KRQDEKRKQADREVK) show a composition bias toward basic and acidic residues.

The protein belongs to the SmpB family.

It localises to the cytoplasm. In terms of biological role, required for rescue of stalled ribosomes mediated by trans-translation. Binds to transfer-messenger RNA (tmRNA), required for stable association of tmRNA with ribosomes. tmRNA and SmpB together mimic tRNA shape, replacing the anticodon stem-loop with SmpB. tmRNA is encoded by the ssrA gene; the 2 termini fold to resemble tRNA(Ala) and it encodes a 'tag peptide', a short internal open reading frame. During trans-translation Ala-aminoacylated tmRNA acts like a tRNA, entering the A-site of stalled ribosomes, displacing the stalled mRNA. The ribosome then switches to translate the ORF on the tmRNA; the nascent peptide is terminated with the 'tag peptide' encoded by the tmRNA and targeted for degradation. The ribosome is freed to recommence translation, which seems to be the essential function of trans-translation. In Prochlorococcus marinus (strain MIT 9313), this protein is SsrA-binding protein.